Consider the following 95-residue polypeptide: Aspartyl/glutamyl-tRNA(Asn/Gln) amidotransferase subunit C (95 aa).

It belongs to the GatC family. Heterotrimer of A, B and C subunits.

The enzyme catalyses L-glutamyl-tRNA(Gln) + L-glutamine + ATP + H2O = L-glutaminyl-tRNA(Gln) + L-glutamate + ADP + phosphate + H(+). It catalyses the reaction L-aspartyl-tRNA(Asn) + L-glutamine + ATP + H2O = L-asparaginyl-tRNA(Asn) + L-glutamate + ADP + phosphate + 2 H(+). In terms of biological role, allows the formation of correctly charged Asn-tRNA(Asn) or Gln-tRNA(Gln) through the transamidation of misacylated Asp-tRNA(Asn) or Glu-tRNA(Gln) in organisms which lack either or both of asparaginyl-tRNA or glutaminyl-tRNA synthetases. The reaction takes place in the presence of glutamine and ATP through an activated phospho-Asp-tRNA(Asn) or phospho-Glu-tRNA(Gln). This is Aspartyl/glutamyl-tRNA(Asn/Gln) amidotransferase subunit C from Roseobacter denitrificans (strain ATCC 33942 / OCh 114) (Erythrobacter sp. (strain OCh 114)).